A 101-amino-acid chain; its full sequence is Small ribosomal subunit protein uS14 (101 aa).

This sequence belongs to the universal ribosomal protein uS14 family. Part of the 30S ribosomal subunit. Contacts proteins S3 and S10.

Its function is as follows. Binds 16S rRNA, required for the assembly of 30S particles and may also be responsible for determining the conformation of the 16S rRNA at the A site. The chain is Small ribosomal subunit protein uS14 from Acinetobacter baumannii (strain SDF).